Here is a 227-residue protein sequence, read N- to C-terminus: UPF0758 protein SSA_1218 (227 aa).

Residues 104 to 226 (QIMGSQKLAR…YYSYREETDM (123 aa)) form the MPN domain. Zn(2+)-binding residues include H175, H177, and D188. The JAMM motif motif lies at 175-188 (HNHPSGSVVPSRND).

Belongs to the UPF0758 family.

This chain is UPF0758 protein SSA_1218, found in Streptococcus sanguinis (strain SK36).